The sequence spans 177 residues: Large ribosomal subunit protein uL6 (177 aa).

It belongs to the universal ribosomal protein uL6 family. In terms of assembly, part of the 50S ribosomal subunit.

Its function is as follows. This protein binds to the 23S rRNA, and is important in its secondary structure. It is located near the subunit interface in the base of the L7/L12 stalk, and near the tRNA binding site of the peptidyltransferase center. The polypeptide is Large ribosomal subunit protein uL6 (Brucella abortus (strain S19)).